Here is a 460-residue protein sequence, read N- to C-terminus: MEKWWFNSMLFNKKLEYRCGLSKSIDSFGPIEKKSEEPSIVTDNDSYSHVDYLVDVSNRQNFLSDKTFLVRDRNSYSYSIFFAIENKILEIDYDSQFNWKNIINSCIENYLRSQICIDSDILDNSFKYNDNDSDVYSYICGKVTNSSQSTSTDVITITNDSEKESFNDDDDFTQKYKHLWVQCESCYGLNYKKFFKSKMNICEHCGDHLKMSSSDRIELLIDPGTWNPRDEDMVSLDPIEFDPIELDPIELDPIELDSEDEPYKTRLDSYQKRTGLSEAVQTGTGQINGIPVAIGIMDFQFMGGSMGSVVGEKITRLIEYATNQLLPLIIVCASGGARMQEGSLSLMQMAKISSALYNYQINQKLFYVAILTSPTTGGVTASFGMLGDIIIAEPNAYIAFAGKRVIEQTLNTEVPEGSQSAEFLFEKGLFDSIVPRNLLKEVLGELFQFHGFFPLTQNGN.

A CoA carboxyltransferase N-terminal domain is found at 179-460 (LWVQCESCYG…GFFPLTQNGN (282 aa)). Positions 183, 186, 202, and 205 each coordinate Zn(2+). The C4-type zinc finger occupies 183 to 205 (CESCYGLNYKKFFKSKMNICEHC).

This sequence belongs to the AccD/PCCB family. In terms of assembly, acetyl-CoA carboxylase is a heterohexamer composed of biotin carboxyl carrier protein, biotin carboxylase and 2 subunits each of ACCase subunit alpha and ACCase plastid-coded subunit beta (accD). Zn(2+) is required as a cofactor.

The protein localises to the plastid. It localises to the chloroplast stroma. It catalyses the reaction N(6)-carboxybiotinyl-L-lysyl-[protein] + acetyl-CoA = N(6)-biotinyl-L-lysyl-[protein] + malonyl-CoA. Its pathway is lipid metabolism; malonyl-CoA biosynthesis; malonyl-CoA from acetyl-CoA: step 1/1. Functionally, component of the acetyl coenzyme A carboxylase (ACC) complex. Biotin carboxylase (BC) catalyzes the carboxylation of biotin on its carrier protein (BCCP) and then the CO(2) group is transferred by the transcarboxylase to acetyl-CoA to form malonyl-CoA. The polypeptide is Acetyl-coenzyme A carboxylase carboxyl transferase subunit beta, chloroplastic (Cicer arietinum (Chickpea)).